The following is a 141-amino-acid chain: MTCVLKGCVNEGTVLGHETCSIGHANKLRKQVADMVGVTRRCAENNCGWFVCVIVNDFTFDVYNCCGRSHLEKCRKRIEARNREIWKQIERIRAERSFATVKKSRNSKPSKKKFKERKEFGTPKRFLRDDVPLGIDQLFAF.

A disordered region spans residues 100-119 (TVKKSRNSKPSKKKFKERKE). Over residues 102–115 (KKSRNSKPSKKKFK) the composition is skewed to basic residues.

This Tobacco rattle virus (strain PLB) protein is 16 kDa protein.